The chain runs to 224 residues: Urease accessory protein UreF (224 aa).

Belongs to the UreF family. In terms of assembly, ureD, UreF and UreG form a complex that acts as a GTP-hydrolysis-dependent molecular chaperone, activating the urease apoprotein by helping to assemble the nickel containing metallocenter of UreC. The UreE protein probably delivers the nickel.

The protein resides in the cytoplasm. Required for maturation of urease via the functional incorporation of the urease nickel metallocenter. This is Urease accessory protein UreF from Pseudomonas fluorescens (strain SBW25).